Here is a 484-residue protein sequence, read N- to C-terminus: Synaptic vesicle membrane protein VAT-1 homolog (484 aa).

Composition is skewed to low complexity over residues 1-13 (MSGE…QQNA) and 40-61 (SAST…PAAE). 2 disordered regions span residues 1-65 (MSGE…KAPE) and 402-484 (IGKI…KEEN). Basic and acidic residues predominate over residues 411-484 (PMKEEEKKEE…KKEEVKKEEN (74 aa)).

Belongs to the zinc-containing alcohol dehydrogenase family. Quinone oxidoreductase subfamily.

The protein is Synaptic vesicle membrane protein VAT-1 homolog of Danio rerio (Zebrafish).